The following is a 371-amino-acid chain: Fructose-1,6-bisphosphatase class 1 1 (371 aa).

4 residues coordinate Mg(2+): glutamate 115, aspartate 134, leucine 136, and aspartate 137. Substrate contacts are provided by residues 137–140, asparagine 228, and 280–282; these read DGSS and YLY. Residue glutamate 300 participates in Mg(2+) binding.

The protein belongs to the FBPase class 1 family. Homotetramer. It depends on Mg(2+) as a cofactor.

The protein localises to the cytoplasm. It carries out the reaction beta-D-fructose 1,6-bisphosphate + H2O = beta-D-fructose 6-phosphate + phosphate. The protein operates within carbohydrate biosynthesis; gluconeogenesis. This Xanthobacter autotrophicus (strain ATCC BAA-1158 / Py2) protein is Fructose-1,6-bisphosphatase class 1 1.